The primary structure comprises 519 residues: Alternative NAD(P)H-ubiquinone oxidoreductase C1, chloroplastic/mitochondrial (519 aa).

Residues 1 to 52 (MAVLSSVSSLIPFSYGATRLTSKASLASRTSGFNLSSRWNSTRNSPMLYLSR) constitute a chloroplast and mitochondrion transit peptide. 82 to 118 (RVCILGGGFGGLYTALRLESLVWPEDKKPQVVLVDQS) is a binding site for FAD. Residue 246 to 282 (IKVAVVGCGYAGVELAATISERLQDRGIVQSINVSKN) coordinates NAD(+).

It belongs to the NADH dehydrogenase family. It depends on FAD as a cofactor. In terms of tissue distribution, flowers, roots, leaves and stems.

The protein localises to the mitochondrion. The protein resides in the mitochondrion inner membrane. It localises to the plastid. Its subcellular location is the chloroplast. It is found in the plastoglobule. It catalyses the reaction a quinone + NADH + H(+) = a quinol + NAD(+). The catalysed reaction is a ubiquinone + NADH + H(+) = a ubiquinol + NAD(+). It carries out the reaction demethylphylloquinone + NADPH + H(+) = demethylphylloquinol + NADP(+). With respect to regulation, inhibited by dicumarol. Functionally, bifunctional oxidoreductase ables to act both on prenyl naphthoquinones and on prenyl benzoquinones. May serve a respiratory function. Involved in an electron flow toward the plastoglobule plastoquinone pool. Required for plastochromanol-8 accumulation and for phylloquinone (vitamin K1) production. Probably not directly involved in cyclic or chlororespiratory electron flows under standard growth conditions, but participates in the redox metabolism of plastoquinone-9 and the tocophrol recycling-intermediate alpha-tocopherol quinone. Catalyzes the penultimate step in the biosynthesis of vitamin K1. This chain is Alternative NAD(P)H-ubiquinone oxidoreductase C1, chloroplastic/mitochondrial, found in Arabidopsis thaliana (Mouse-ear cress).